A 174-amino-acid polypeptide reads, in one-letter code: FMN-dependent NADPH-azoreductase (174 aa).

FMN contacts are provided by residues 9–11 (TPR), 15–16 (RT), 73–76 (EYHS), and G106.

It belongs to the azoreductase type 2 family. As to quaternary structure, homotetramer. FMN serves as cofactor.

Functionally, catalyzes the reductive cleavage of azo bond in aromatic azo compounds to the corresponding amines. Requires NADPH, but not NADH, as an electron donor for its activity. In Bacillus subtilis (strain 168), this protein is FMN-dependent NADPH-azoreductase (azr).